The chain runs to 1473 residues: Sulfite reductase [NADPH] subunit beta (1473 aa).

Residues 728–876 (LTILFASDGG…AYNLWEPELW (149 aa)) form the Flavodoxin-like domain. [4Fe-4S] cluster contacts are provided by C1328, C1334, C1373, and C1377. C1377 contributes to the siroheme binding site.

The protein belongs to the nitrite and sulfite reductase 4Fe-4S domain family. In terms of assembly, alpha(2)-beta(2). The alpha component is a flavoprotein, the beta component is a hemoprotein. The cofactor is siroheme. Requires [4Fe-4S] cluster as cofactor.

The protein resides in the cytoplasm. The enzyme catalyses hydrogen sulfide + 3 NADP(+) + 3 H2O = sulfite + 3 NADPH + 4 H(+). It participates in sulfur metabolism; hydrogen sulfide biosynthesis; hydrogen sulfide from sulfite (NADPH route): step 1/1. Catalyzes the reduction of sulfite to sulfide, one of several activities required for the biosynthesis of L-cysteine from sulfate. This Schizosaccharomyces pombe (strain 972 / ATCC 24843) (Fission yeast) protein is Sulfite reductase [NADPH] subunit beta (sir1).